A 256-amino-acid chain; its full sequence is Matrix protein (256 aa).

The tract at residues 1–110 is interaction with M2-1; it reads METYVNKLHE…KLAYDVTTPC (110 aa). The interval 110-183 is nuclear targeting and binding to host importin KPNB1; it reads CEIKACSLTC…LNTLENITTT (74 aa). The Nuclear export signal signature appears at 194 to 206; sequence IIPYSGLLLVITV. Thr205 bears the Phosphothreonine mark.

The protein belongs to the pneumovirinae M protein family. In terms of assembly, forms dimers. Forms higher-order oligomers. Interacts with glycoprotein G (via N-terminus). Interacts with protein M2-1; this interaction directs the matrix protein localization to cytoplasmic inclusions comprising viral proteins L, N, P, and M2-1 and mediates the matrix protein association with the nucleocapsid. Interacts with host importin KPNB1; this interaction mediates nuclear import of the matrix protein early during infection. Interacts with host AP3M1; this interaction plays an essential role in trafficking the matrix protein in host cells. Interacts with host CAV1; this interaction probably facilitates viral budding. Interacts with host CFL1; this interaction probably facilitates viral replication. Interacts with host ZNF502; this interaction probably facilitates viral release. Interacts with host RACK1. Post-translationally, phosphorylation is important for oligomerization.

It localises to the virion. The protein resides in the host cytoplasm. It is found in the host nucleus. Its subcellular location is the host cell membrane. In terms of biological role, plays a crucial role in virus assembly into filaments and budding. Early in infection, localizes in the nucleus where it inhibits host cell transcription through direct binding to host chromatin. Later in infection, traffics to the cytoplasm through the action of host CRM1 to associate with inclusion bodies, the site of viral transcription and replication. During virus assembly and budding, acts as a bridge between the nucleocapsid and the lipid bilayer. Also plays a role in the inhibition of host interferon-beta response in a RACK1-dependent manner. The protein is Matrix protein (M) of Homo sapiens (Human).